The following is an 88-amino-acid chain: Small ribosomal subunit protein uS19 (88 aa).

This sequence belongs to the universal ribosomal protein uS19 family.

Protein S19 forms a complex with S13 that binds strongly to the 16S ribosomal RNA. The protein is Small ribosomal subunit protein uS19 of Mycoplasma mycoides subsp. mycoides SC (strain CCUG 32753 / NCTC 10114 / PG1).